A 156-amino-acid polypeptide reads, in one-letter code: Small ribosomal subunit protein uS7 (156 aa).

Belongs to the universal ribosomal protein uS7 family. Part of the 30S ribosomal subunit. Contacts proteins S9 and S11.

In terms of biological role, one of the primary rRNA binding proteins, it binds directly to 16S rRNA where it nucleates assembly of the head domain of the 30S subunit. Is located at the subunit interface close to the decoding center, probably blocks exit of the E-site tRNA. In Trichormus variabilis (strain ATCC 29413 / PCC 7937) (Anabaena variabilis), this protein is Small ribosomal subunit protein uS7.